Here is a 238-residue protein sequence, read N- to C-terminus: NADH-quinone oxidoreductase subunit C (238 aa).

Positions 1–20 (MSSPDQNPSDAAGQTGSSNE) are disordered.

This sequence belongs to the complex I 30 kDa subunit family. NDH-1 is composed of 14 different subunits. Subunits NuoB, C, D, E, F, and G constitute the peripheral sector of the complex.

The protein localises to the cell membrane. It catalyses the reaction a quinone + NADH + 5 H(+)(in) = a quinol + NAD(+) + 4 H(+)(out). In terms of biological role, NDH-1 shuttles electrons from NADH, via FMN and iron-sulfur (Fe-S) centers, to quinones in the respiratory chain. The immediate electron acceptor for the enzyme in this species is believed to be a menaquinone. Couples the redox reaction to proton translocation (for every two electrons transferred, four hydrogen ions are translocated across the cytoplasmic membrane), and thus conserves the redox energy in a proton gradient. The sequence is that of NADH-quinone oxidoreductase subunit C from Mycobacterium ulcerans (strain Agy99).